The sequence spans 147 residues: uncharacterized protein (147 aa).

The region spanning 4 to 120 (KWAKRFFQMA…EQTEDFLSRW (117 aa)) is the CMP/dCMP-type deaminase domain. Position 67 (histidine 67) interacts with Zn(2+). Glutamate 69 (proton donor) is an active-site residue. Positions 92 and 95 each coordinate Zn(2+).

It belongs to the cytidine and deoxycytidylate deaminase family. The cofactor is Zn(2+).

This is an uncharacterized protein from Aliivibrio fischeri (Vibrio fischeri).